Consider the following 130-residue polypeptide: Small ribosomal subunit protein uS9 (130 aa).

The segment at 105-130 is disordered; sequence TRDPRMKERKKYGLHKARKAPQYSKR. Residues 111 to 130 show a composition bias toward basic residues; it reads KERKKYGLHKARKAPQYSKR.

Belongs to the universal ribosomal protein uS9 family.

This is Small ribosomal subunit protein uS9 from Syntrophomonas wolfei subsp. wolfei (strain DSM 2245B / Goettingen).